A 176-amino-acid polypeptide reads, in one-letter code: NAD(P)H-quinone oxidoreductase subunit 6, chloroplastic (176 aa).

5 helical membrane-spanning segments follow: residues 10–30 (FLLV…VLLP), 32–52 (PIFS…LYIL), 61–81 (AQLL…VMFM), 92–112 (LWTV…FLLM), and 152–172 (FFLP…GAIS).

Belongs to the complex I subunit 6 family. NDH is composed of at least 16 different subunits, 5 of which are encoded in the nucleus.

It is found in the plastid. The protein localises to the chloroplast thylakoid membrane. It carries out the reaction a plastoquinone + NADH + (n+1) H(+)(in) = a plastoquinol + NAD(+) + n H(+)(out). It catalyses the reaction a plastoquinone + NADPH + (n+1) H(+)(in) = a plastoquinol + NADP(+) + n H(+)(out). Its function is as follows. NDH shuttles electrons from NAD(P)H:plastoquinone, via FMN and iron-sulfur (Fe-S) centers, to quinones in the photosynthetic chain and possibly in a chloroplast respiratory chain. The immediate electron acceptor for the enzyme in this species is believed to be plastoquinone. Couples the redox reaction to proton translocation, and thus conserves the redox energy in a proton gradient. This Olimarabidopsis pumila (Dwarf rocket) protein is NAD(P)H-quinone oxidoreductase subunit 6, chloroplastic (ndhG).